A 438-amino-acid chain; its full sequence is MRDVHGSLKYFSSVAEDMNPSDVFQIIEGHTKLMRDSIPLIASENLTSLSVRRCYVSDLGHRYAEGRVGERFYEGCKYVDQIESMAIELTRKIFEAEHANVQPISGVVANLAAFFALTNVGDTIMSISVPCGGHISHDRVSAAGLRGLRVIHYPFNSEEMSVDVDETRKVAERERPKLFILGSSLILFRQPVKEIREIADEIGAYVMYDASHVLGLIAGKAFQNPLKEGADVMTGSTHKTFFGPQRAIIASRKELAEKVDRAVFPGVVSNHHLNTLAGYVVAAMEMLEFGEDYAKQVVRNAKALAEELYSLGYKVLGEKRGFTETHQVAVDVREFGGGERVAKVLENAGIILNKNLLPWDSLEKTANPSGIRIGVQEVTRIGMKEEEMRAIAEIMDAAIKEKKSVDELRNEVKELKERFNVIKYSFDESEAYHFPDLR.

Position 133–135 (133–135 (GHI)) interacts with (6S)-5,6,7,8-tetrahydrofolate. Residue Lys-239 is modified to N6-(pyridoxal phosphate)lysine.

This sequence belongs to the SHMT family. As to quaternary structure, homodimer. It depends on pyridoxal 5'-phosphate as a cofactor.

The protein localises to the cytoplasm. It catalyses the reaction 5,10-methylenetetrahydromethanopterin + glycine + H2O = 5,6,7,8-tetrahydromethanopterin + L-serine. It functions in the pathway amino-acid biosynthesis; glycine biosynthesis; glycine from L-serine: step 1/1. Catalyzes the reversible interconversion of serine and glycine with tetrahydromethanopterin (H4MPT) serving as the one-carbon carrier. Also exhibits a pteridine-independent aldolase activity toward beta-hydroxyamino acids, producing glycine and aldehydes, via a retro-aldol mechanism. The protein is Serine hydroxymethyltransferase of Archaeoglobus fulgidus (strain ATCC 49558 / DSM 4304 / JCM 9628 / NBRC 100126 / VC-16).